The following is a 339-amino-acid chain: MRVYYDRDADLNLIKGKKVVIIGYGSQGHAHALNLKDSGVKDVAIALRKGSTSAQKAEAAGFKVMEVAEAAKWADVMMMLTPDELQGDIYREHLHDNMKNGAALLFAHGLNVHFNLIEPRADLDVVMVAPKGPGHTVRSEYQRGGGVPCLIAVHKDSSGNAHDLGLSYASAIGGGRAGIIETTFREECETDLFGEQVVLCGGLVELIKGGFETLVEAGYAPEMAYFECLHEVKLIVDLIYEGGIANMNYSISNTAEYGEYVTGPRIVTPETKKEMKKVLEDIQNGIFTRNWMLENKVNQTSFKATRAKLAEHQIEEVGAKLRDMMPWIKKGALVDKSKN.

Residues 1–182 enclose the KARI N-terminal Rossmann domain; sequence MRVYYDRDAD…GGGRAGIIET (182 aa). Residues 24–27, Arg48, Ser51, Ser53, and 83–86 contribute to the NADP(+) site; these read YGSQ and DELQ. Residue His108 is part of the active site. NADP(+) is bound at residue Gly134. A KARI C-terminal knotted domain is found at 183-328; it reads TFREECETDL…AKLRDMMPWI (146 aa). Residues Asp191, Glu195, Glu227, and Glu231 each contribute to the Mg(2+) site. Substrate is bound at residue Ser252.

This sequence belongs to the ketol-acid reductoisomerase family. The cofactor is Mg(2+).

The catalysed reaction is (2R)-2,3-dihydroxy-3-methylbutanoate + NADP(+) = (2S)-2-acetolactate + NADPH + H(+). The enzyme catalyses (2R,3R)-2,3-dihydroxy-3-methylpentanoate + NADP(+) = (S)-2-ethyl-2-hydroxy-3-oxobutanoate + NADPH + H(+). It participates in amino-acid biosynthesis; L-isoleucine biosynthesis; L-isoleucine from 2-oxobutanoate: step 2/4. Its pathway is amino-acid biosynthesis; L-valine biosynthesis; L-valine from pyruvate: step 2/4. Its function is as follows. Involved in the biosynthesis of branched-chain amino acids (BCAA). Catalyzes an alkyl-migration followed by a ketol-acid reduction of (S)-2-acetolactate (S2AL) to yield (R)-2,3-dihydroxy-isovalerate. In the isomerase reaction, S2AL is rearranged via a Mg-dependent methyl migration to produce 3-hydroxy-3-methyl-2-ketobutyrate (HMKB). In the reductase reaction, this 2-ketoacid undergoes a metal-dependent reduction by NADPH to yield (R)-2,3-dihydroxy-isovalerate. The sequence is that of Ketol-acid reductoisomerase (NADP(+)) from Rhodopseudomonas palustris (strain BisB18).